The following is a 2227-amino-acid chain: Genome polyprotein (2227 aa).

Short sequence motifs ((L)YPX(n)L motif) lie at residues 167–171 (YPHGL) and 200–205 (YPVWEL). The segment at 766-836 (MMSRIAAGDL…PRKMKGLFSQ (71 aa)) is involved in P1-2A pentamerization. The helical transmembrane segment at 1011 to 1031 (TVEIINTVLCFVKSGILLYVI) threads the bilayer. Positions 1043–1070 (IGLLRVMNYADIGCSVISCGKVFSKMLE) are membrane-penetrating ability. Residues 1127-1152 (KKKDILNILKDNQQKIEKAIEEADNF) are a coiled coil. In terms of domain architecture, SF3 helicase spans 1204–1366 (HQKLKNLGSI…SFFKNPHNDM (163 aa)). An ATP-binding site is contributed by 1230-1237 (GKRGGGKS). A helical membrane pass occupies residues 1462–1482 (WVAVGAAVGILGVLVGGWFVY). At tyrosine 1499 the chain carries O-(5'-phospho-RNA)-tyrosine. In terms of domain architecture, Peptidase C3 spans 1514-1728 (DPVESQSTLE…VAKLVTQEMF (215 aa)). Catalysis depends on for protease 3C activity residues histidine 1563, aspartate 1603, and cysteine 1691. In terms of domain architecture, RdRp catalytic spans 1976–2097 (DVGLDLDFSA…VFSRDVQIDN (122 aa)).

Belongs to the picornaviridae polyprotein family. Homodimer. Homomultimer; probably interacts with membranes in a multimeric form. Seems to assemble into amyloid-like fibers. In terms of assembly, homodimer. Monomer. Interacts with protein 3CD. As to quaternary structure, interacts with host ACBD3. Interacts with protein 3AB. In terms of assembly, interacts with human MAVS. As to quaternary structure, homodimer; disulfide-linked. Homopentamer. Homooligomer. In terms of assembly, interacts with capsid protein VP2. Interacts with capsid protein VP3. As to quaternary structure, interacts with capsid protein VP1. Interacts with capsid protein VP3. Interacts with capsid protein VP1. Interacts with capsid protein VP2. Specific enzymatic cleavages by viral protease in vivo yield a variety of precursors and mature proteins. Polyprotein processing intermediates are produced, such as P1-2A which is a functional precursor of the structural proteins, VP0 which is a VP4-VP2 precursor, VP1-2A precursor, 3ABC precursor which is a stable and catalytically active precursor of 3A, 3B and 3C proteins, 3AB and 3CD precursors. The assembly signal 2A is removed from VP1-2A by a host protease, possibly host Cathepsin L. This cleavage occurs over a region of 3 amino-acids probably generating VP1 proteins with heterogeneous C-termini. In terms of processing, during virion maturation, immature virions are rendered infectious following cleavage of VP0 into VP4 and VP2. This maturation seems to be an autocatalytic event triggered by the presence of RNA in the capsid and is followed by a conformational change of the particle. Post-translationally, the assembly signal 2A is removed from VP1-2A by a host protease, possibly host Cathepsin L in naked virions. This cleavage does not occur in enveloped virions. This cleavage occurs over a region of 3 amino-acids probably generating VP1 proteins with heterogeneous C-termini. VPg is uridylylated prior to priming replication into VPg-pUpU. In terms of processing, unlike other picornaviruses, does not seem to be myristoylated.

It localises to the virion. Its subcellular location is the host endosome. The protein resides in the host multivesicular body. The protein localises to the host membrane. It is found in the host mitochondrion outer membrane. It localises to the host cytoplasm. Its subcellular location is the host cytoplasmic vesicle membrane. The enzyme catalyses RNA(n) + a ribonucleoside 5'-triphosphate = RNA(n+1) + diphosphate. It carries out the reaction a ribonucleoside 5'-triphosphate + H2O = a ribonucleoside 5'-diphosphate + phosphate + H(+). It catalyses the reaction Selective cleavage of Gln-|-Gly bond in the poliovirus polyprotein. In other picornavirus reactions Glu may be substituted for Gln, and Ser or Thr for Gly.. Functionally, capsid proteins VP1, VP2, and VP3 form a closed capsid enclosing the viral positive strand RNA genome. All these proteins contain a beta-sheet structure called beta-barrel jelly roll. Together they form an icosahedral capsid (T=3) composed of 60 copies of each VP1, VP2, and VP3, with a diameter of approximately 300 Angstroms. VP1 is situated at the 12 fivefold axes, whereas VP2 and VP3 are located at the quasi-sixfold axes. The naked capsid interacts with the host receptor HAVCR1 to provide virion attachment to and probably entry into the target cell. VP0 precursor is a component of the immature procapsids. Its function is as follows. Plays a role in the assembly of the 12 pentamers into an icosahedral structure. Has not been detected in mature virions, supposedly owing to its small size. In terms of biological role, precursor component of immature procapsids that corresponds to an extended form of the structural protein VP1. After maturation, possibly by the host Cathepsin L, the assembly signal 2A is cleaved to give rise to the mature VP1 protein. Functionally, functions as a viroporin. Affects membrane integrity and causes an increase in membrane permeability. Involved in host intracellular membrane rearrangements probably to give rise to the viral factories. Does not disrupt calcium homeostasis or glycoprotein trafficking. Antagonizes the innate immune response of the host by suppressing IFN-beta synthesis, which it achieves by interfering with the RIG-I/IFIH1 pathway. Affects membrane integrity and causes an increase in membrane permeability. Its function is as follows. Associates with and induces structural rearrangements of intracellular membranes. Displays RNA-binding activity. In terms of biological role, the precursor 3ABC is targeted to the mitochondrial membrane where protease 3C activity cleaves and inhibits the host antiviral protein MAVS, thereby disrupting activation of IRF3 through the IFIH1/MDA5 pathway. In vivo, the protease activity of 3ABC precursor is more efficient in cleaving the 2BC precursor than that of protein 3C. The 3ABC precursor may therefore play a role in the proteolytic processing of the polyprotein. Possible viroporin. Functionally, interacts with the 3CD precursor and with RNA structures found at both the 5'- and 3'-termini of the viral genome. Since the 3AB precursor contains the hydrophobic domain 3A, it probably anchors the whole viral replicase complex to intracellular membranes on which viral RNA synthesis occurs. May serve as membrane anchor to the 3AB and 3ABC precursors via its hydrophobic domain. May interact with RNA. Its function is as follows. Acts as a primer for viral RNA replication and remains covalently bound to viral genomic RNA. VPg is uridylylated prior to priming replication into VPg-pUpU. The VPg-pUpU is then used as primer on the genomic RNA poly(A) by the RNA-dependent RNA polymerase to replicate the viral genome. In terms of biological role, cysteine protease that generates mature viral proteins from the precursor polyprotein. In addition to its proteolytic activity, it binds to viral RNA, and thus influences viral genome replication. RNA and substrate bind cooperatively to the protease. Cleaves IKBKG/NEMO to impair innate immune signaling. Cleaves host PABPC1 which may participate in the switch of viral translation to RNA synthesis. Functionally, interacts with the 3AB precursor and with RNA structures found at both the 5'- and 3'-termini of the viral genome. Disrupts TLR3 signaling by degrading the host adapter protein TICAM1/TRIF. RNA-directed RNA polymerase 3D-POL replicates genomic and antigenomic RNA by recognizing replications specific signals. The protein is Genome polyprotein of Cercopithecus hamlyni (Owl-faced monkey).